Reading from the N-terminus, the 183-residue chain is Putative NAD(P)H nitroreductase YdjA (183 aa).

Residues 10 to 12, R35, and H39 contribute to the FMN site; that span reads RRS. An NAD(+)-binding site is contributed by 121–126; it reads AAVAQG. Residue 131 to 133 coordinates FMN; it reads WRS.

Belongs to the nitroreductase family. As to quaternary structure, homodimer. Requires FMN as cofactor.

This Escherichia coli O157:H7 protein is Putative NAD(P)H nitroreductase YdjA (ydjA).